The chain runs to 819 residues: Zinc finger protein 658B (819 aa).

The C2H2-type 1; degenerate zinc finger occupies 141-166 (YLSDEHGKCRKSFYWKAHLIQHERPH). 14 C2H2-type zinc fingers span residues 200 to 222 (YECNECGKAFCQNSNLSKHLRIH), 278 to 300 (YECIECGKTFSKTSHLRAHQRIH), 306 to 328 (YECVECEKTFSHKTHLSVHQRVH), 334 to 356 (YECNDCGKSFTYNSALRAHQRIH), 362 to 384 (YECSDCEKTFAHNSALRAHHRIH), 390 to 412 (YECNECGRSFAHISVLKAHQRIH), 418 to 440 (YECNECGRSFTYNSALRAHQRIH), 446 to 468 (YECSDCEKTFAHNSALKIHQRIH), 474 to 496 (YKCNECEKTFAHNSALRAHQNIH), 502 to 524 (YECSECGKTFFQKTRLSTHRRIH), 530 to 552 (YECSKCGKTFSQKSYLSGHERIH), 558 to 580 (YECNVCGKTFVYKAALIVHQRIH), 586 to 608 (YECNECGKTFSQRTHLCAHQRIH), and 614 to 636 (YECNECGKTFADNSALRAHHRIH). Residues 642–664 (YECNDCGKTFSKTSHLRAHLRTR) form a C2H2-type 16; degenerate zinc finger. C2H2-type zinc fingers lie at residues 670–692 (YECSECGKTFSEKSYVSAHQRVH), 698–720 (YECNVCGKPFAHNSTLRVHQRIH), 726–748 (YECNDCGKTFSQKSHLSAHQRIH), 754–776 (YECNECGKAFAQNSTLRVHQRIH), and 782–805 (YECDECGKTFVRKAALRVHHTRMH).

Belongs to the krueppel C2H2-type zinc-finger protein family.

It localises to the nucleus. Functionally, may be involved in transcriptional regulation. This Homo sapiens (Human) protein is Zinc finger protein 658B (ZNF658B).